Here is a 40-residue protein sequence, read N- to C-terminus: Bacterioferritin heavy chain (40 aa).

The Ferritin-like diiron domain maps to 1–40 (MRGNPEVIDYLNMLIGGELAARDQYLIHSRMYEDWGLTKY). E18 provides a ligand contact to Fe cation.

It belongs to the bacterioferritin family. Oligomer consisting of two types of subunits: light chain and heavy chain.

Its function is as follows. May perform analogous functions in iron detoxification and storage to that of animal ferritins. Contains approximately 750 iron atoms per molecule. This chain is Bacterioferritin heavy chain, found in Absidia spinosa.